The chain runs to 576 residues: Lipoprotein LpqB (576 aa).

The signal sequence occupies residues 1–16 (MRRVTRTIAAAGAAIA). Cys-17 carries the N-palmitoyl cysteine lipid modification. A lipid anchor (S-diacylglycerol cysteine) is attached at Cys-17.

Belongs to the LpqB lipoprotein family.

It is found in the cell membrane. The chain is Lipoprotein LpqB from Bifidobacterium longum (strain NCC 2705).